The primary structure comprises 497 residues: Histidine--tRNA ligase (497 aa).

This sequence belongs to the class-II aminoacyl-tRNA synthetase family. In terms of assembly, homodimer.

It is found in the cytoplasm. The enzyme catalyses tRNA(His) + L-histidine + ATP = L-histidyl-tRNA(His) + AMP + diphosphate + H(+). This chain is Histidine--tRNA ligase, found in Dinoroseobacter shibae (strain DSM 16493 / NCIMB 14021 / DFL 12).